Reading from the N-terminus, the 308-residue chain is Pseudouridine-5'-phosphate glycosidase (308 aa).

The active-site Proton donor is glutamate 28. Positions 89 and 109 each coordinate substrate. A Mn(2+)-binding site is contributed by aspartate 141. 143–145 is a substrate binding site; sequence SAD. Lysine 162 serves as the catalytic Nucleophile.

Belongs to the pseudouridine-5'-phosphate glycosidase family. Homotrimer. The cofactor is Mn(2+).

It catalyses the reaction D-ribose 5-phosphate + uracil = psi-UMP + H2O. In terms of biological role, catalyzes the reversible cleavage of pseudouridine 5'-phosphate (PsiMP) to ribose 5-phosphate and uracil. Functions biologically in the cleavage direction, as part of a pseudouridine degradation pathway. The chain is Pseudouridine-5'-phosphate glycosidase from Brachyspira hyodysenteriae (strain ATCC 49526 / WA1).